A 435-amino-acid polypeptide reads, in one-letter code: Histidinol dehydrogenase (435 aa).

Y131, Q189, and N212 together coordinate NAD(+). S238, Q260, and H263 together coordinate substrate. Residues Q260 and H263 each coordinate Zn(2+). Residues E327 and H328 each act as proton acceptor in the active site. Positions 328, 361, 415, and 420 each coordinate substrate. D361 is a binding site for Zn(2+). H420 lines the Zn(2+) pocket.

Belongs to the histidinol dehydrogenase family. As to quaternary structure, homodimer. The cofactor is Zn(2+).

The catalysed reaction is L-histidinol + 2 NAD(+) + H2O = L-histidine + 2 NADH + 3 H(+). It participates in amino-acid biosynthesis; L-histidine biosynthesis; L-histidine from 5-phospho-alpha-D-ribose 1-diphosphate: step 9/9. Its function is as follows. Catalyzes the sequential NAD-dependent oxidations of L-histidinol to L-histidinaldehyde and then to L-histidine. This Buchnera aphidicola subsp. Acyrthosiphon pisum (strain APS) (Acyrthosiphon pisum symbiotic bacterium) protein is Histidinol dehydrogenase (hisD).